Reading from the N-terminus, the 420-residue chain is 4-hydroxy-3-methylbut-2-en-1-yl diphosphate synthase (flavodoxin) (420 aa).

Residues Cys307, Cys310, Cys353, and Glu360 each contribute to the [4Fe-4S] cluster site.

This sequence belongs to the IspG family. It depends on [4Fe-4S] cluster as a cofactor.

The catalysed reaction is (2E)-4-hydroxy-3-methylbut-2-enyl diphosphate + oxidized [flavodoxin] + H2O + 2 H(+) = 2-C-methyl-D-erythritol 2,4-cyclic diphosphate + reduced [flavodoxin]. It participates in isoprenoid biosynthesis; isopentenyl diphosphate biosynthesis via DXP pathway; isopentenyl diphosphate from 1-deoxy-D-xylulose 5-phosphate: step 5/6. Converts 2C-methyl-D-erythritol 2,4-cyclodiphosphate (ME-2,4cPP) into 1-hydroxy-2-methyl-2-(E)-butenyl 4-diphosphate. This Brucella melitensis biotype 2 (strain ATCC 23457) protein is 4-hydroxy-3-methylbut-2-en-1-yl diphosphate synthase (flavodoxin).